The primary structure comprises 388 residues: Probable fatty acid desaturase DES1 (388 aa).

Residues 1–33 (MATTPMTVVDHEAEEAVAKAREDDKSRQVDAFD) form a disordered region. Basic and acidic residues predominate over residues 9–30 (VDHEAEEAVAKAREDDKSRQVD). 2 helical membrane passes run 62–82 (LWYVVRDVAAVVALGTAAAAM) and 85–105 (WAVWPVYWAVQGTMFWAFFVL). A Histidine box-1 motif is present at residues 107–111 (HDCGH). Residues 119–139 (TLNSVVGHLLHSFILIPYHGW) form a helical membrane-spanning segment. Positions 143–147 (HRTHH) match the Histidine box-2 motif. A run of 3 helical transmembrane segments spans residues 177 to 194 (IRFTAPYPLLLFPLYLFY), 226 to 246 (WCIMLASLLAMSCAFGPLQVL), and 248 to 268 (MYGLPYLVFVMWLDLVTYLHH). Residues 310–314 (HVIHH) carry the Histidine box-3 motif.

The protein belongs to the fatty acid desaturase type 1 family. As to expression, highly expressed in root hair cells. Barely detected in panicle, shoot apex, stems and leaves.

The protein resides in the membrane. It functions in the pathway lipid metabolism; polyunsaturated fatty acid biosynthesis. The protein is Probable fatty acid desaturase DES1 of Sorghum bicolor (Sorghum).